Consider the following 309-residue polypeptide: Probable WRKY transcription factor 26 (309 aa).

The interval 1 to 24 (MGSFDRQRAVPKFKTATPSPLPLS) is disordered. Positions 111-176 (SSNKTSDDGY…YKGSHNHPKP (66 aa)) form a DNA-binding region, WRKY 1. Zn(2+)-binding residues include Cys142, Cys147, His171, and His173. The disordered stretch occupies residues 167–210 (YKGSHNHPKPQSTKRSSSTAIAAHQNSSNGDGKDIGEDETEAKR). Over residues 175–196 (KPQSTKRSSSTAIAAHQNSSNG) the composition is skewed to polar residues. Residues 197–210 (DGKDIGEDETEAKR) are compositionally biased toward basic and acidic residues. A DNA-binding region (WRKY 2) is located at residues 228–293 (SDIDILDDGY…YEGKHKHQIP (66 aa)). Cys259, Cys264, His288, and His290 together coordinate Zn(2+).

It belongs to the WRKY group I family. Interacts with VQ10.

It localises to the nucleus. In terms of biological role, transcription factor. Interacts specifically with the W box (5'-(T)TGAC[CT]-3'), a frequently occurring elicitor-responsive cis-acting element. Functions with WRKY25 and WRKY33 as positive regulator of plant thermotolerance by partially participating in ethylene-response signal transduction pathway. In Arabidopsis thaliana (Mouse-ear cress), this protein is Probable WRKY transcription factor 26 (WRKY26).